The sequence spans 453 residues: Methionine aminopeptidase 2-1 (453 aa).

Basic and acidic residues predominate over residues 1-12 (MGSKTPDGHRQS). The disordered stretch occupies residues 1–101 (MGSKTPDGHR…TTPPRVPLST (101 aa)). Residues 46–57 (GEDDDDDDENEE) show a composition bias toward acidic residues. A compositionally biased stretch (basic residues) spans 67-82 (KKKKRKKSKKKNKKSK). His-210 is a substrate binding site. Asp-231, Asp-242, and His-306 together coordinate a divalent metal cation. His-314 serves as a coordination point for substrate. A divalent metal cation-binding residues include Glu-339 and Glu-434.

It belongs to the peptidase M24A family. Methionine aminopeptidase eukaryotic type 2 subfamily. Co(2+) serves as cofactor. Requires Zn(2+) as cofactor. Mn(2+) is required as a cofactor. The cofactor is Fe(2+).

The protein localises to the cytoplasm. The catalysed reaction is Release of N-terminal amino acids, preferentially methionine, from peptides and arylamides.. Functionally, cotranslationally removes the N-terminal methionine from nascent proteins. The N-terminal methionine is often cleaved when the second residue in the primary sequence is small and uncharged (Met-Ala-, Cys, Gly, Pro, Ser, Thr, or Val). The protein is Methionine aminopeptidase 2-1 of Aspergillus terreus (strain NIH 2624 / FGSC A1156).